The primary structure comprises 384 residues: Nodal homolog 2-B (384 aa).

The signal sequence occupies residues 1–18 (MASLGAILLFAIASLMHG). Positions 19 to 283 (RPIHSDRKGA…RVADARRHRR (265 aa)) are excised as a propeptide. 3 N-linked (GlcNAc...) asparagine glycosylation sites follow: Asn71, Asn173, and Asn344. A disulfide bond links Cys306 and Cys372.

This sequence belongs to the TGF-beta family. Homodimer; disulfide-linked. Forms heterodimers with the TGF-beta family member derriere. Interacts with tsku; enhances nodal2 activity.

The protein resides in the secreted. In terms of biological role, cooperation and regulatory loops of multiple nodals are essential for mesendoderm patterning in early embryos. Essential for mesoderm formation and axial patterning during embryonic development. Activates the activin-like signaling pathway to induce dorsal and ventral mesoderm in animal cap ectoderm. In addition, also dorsalizes ventral marginal zone (VMZ) tissues during gastrulation. Induces muscle actin. Appears to act as both a short-range and long-range morphogen. The unprocessed protein inhibits bmp- and wnt-signaling. In Xenopus laevis (African clawed frog), this protein is Nodal homolog 2-B (nodal2-b).